We begin with the raw amino-acid sequence, 184 residues long: uncharacterized protein (184 aa).

The interval 32 to 52 (PCPRSRTQGQSRRSETHTISR) is disordered.

Its subcellular location is the mitochondrion. This is an uncharacterized protein from Arabidopsis thaliana (Mouse-ear cress).